The sequence spans 476 residues: Bifunctional protein GlmU (476 aa).

The tract at residues 1–235 (MTALDIIIMA…ALQVAGVNSP (235 aa)) is pyrophosphorylase. Residues lysine 23, glutamine 81, 86–87 (GT), 108–110 (SGD), glycine 145, glutamate 160, and asparagine 233 each bind UDP-N-acetyl-alpha-D-glucosamine. Mg(2+) is bound at residue aspartate 110. Residue asparagine 233 participates in Mg(2+) binding. The interval 236–256 (AQLAELERAHQRAQAAALMEQ) is linker. The interval 257–476 (GVRLADPARF…WKRPAKQAKG (220 aa)) is N-acetyltransferase. 2 residues coordinate UDP-N-acetyl-alpha-D-glucosamine: arginine 351 and lysine 369. Histidine 381 acts as the Proton acceptor in catalysis. UDP-N-acetyl-alpha-D-glucosamine is bound by residues tyrosine 384 and asparagine 395. Acetyl-CoA is bound by residues alanine 398, 404–405 (NY), serine 423, glycine 441, and arginine 458.

The protein in the N-terminal section; belongs to the N-acetylglucosamine-1-phosphate uridyltransferase family. In the C-terminal section; belongs to the transferase hexapeptide repeat family. In terms of assembly, homotrimer. The cofactor is Mg(2+).

The protein localises to the cytoplasm. The enzyme catalyses alpha-D-glucosamine 1-phosphate + acetyl-CoA = N-acetyl-alpha-D-glucosamine 1-phosphate + CoA + H(+). It catalyses the reaction N-acetyl-alpha-D-glucosamine 1-phosphate + UTP + H(+) = UDP-N-acetyl-alpha-D-glucosamine + diphosphate. It participates in nucleotide-sugar biosynthesis; UDP-N-acetyl-alpha-D-glucosamine biosynthesis; N-acetyl-alpha-D-glucosamine 1-phosphate from alpha-D-glucosamine 6-phosphate (route II): step 2/2. It functions in the pathway nucleotide-sugar biosynthesis; UDP-N-acetyl-alpha-D-glucosamine biosynthesis; UDP-N-acetyl-alpha-D-glucosamine from N-acetyl-alpha-D-glucosamine 1-phosphate: step 1/1. Its pathway is bacterial outer membrane biogenesis; LPS lipid A biosynthesis. Catalyzes the last two sequential reactions in the de novo biosynthetic pathway for UDP-N-acetylglucosamine (UDP-GlcNAc). The C-terminal domain catalyzes the transfer of acetyl group from acetyl coenzyme A to glucosamine-1-phosphate (GlcN-1-P) to produce N-acetylglucosamine-1-phosphate (GlcNAc-1-P), which is converted into UDP-GlcNAc by the transfer of uridine 5-monophosphate (from uridine 5-triphosphate), a reaction catalyzed by the N-terminal domain. This Acidovorax ebreus (strain TPSY) (Diaphorobacter sp. (strain TPSY)) protein is Bifunctional protein GlmU.